The sequence spans 165 residues: Transcription elongation factor A protein-like 1 (165 aa).

Disordered stretches follow at residues 1–66 and 89–124; these read MENS…LLPE and IPME…GDIH. The span at 33–60 shows a compositional bias: acidic residues; sequence CSEDDQSSEDLSSEEQSSDEEFFPEELL. Positions 101-124 are enriched in basic and acidic residues; that stretch reads HKLEEGSFKERLARSRPQFRGDIH.

The protein belongs to the TFS-II family. TFA subfamily.

Its subcellular location is the nucleus. Its function is as follows. May be involved in transcriptional regulation. Modulates various viral and cellular promoters in a promoter context-dependent manner. Does not bind DNA directly. The chain is Transcription elongation factor A protein-like 1 from Rattus norvegicus (Rat).